Consider the following 757-residue polypeptide: POU domain, class 2, transcription factor 1 (757 aa).

Disordered stretches follow at residues 1 to 43 (MKLH…QTNG), 271 to 295 (AATP…SLEE), 375 to 398 (SLSN…RRKK), and 532 to 574 (VSSV…TSPL). Polar residues-rich tracts occupy residues 19-43 (RMNN…QTNG) and 275-285 (VQQLPQSQTTP). Positions 294–368 (EEPSDLEELE…LLEKWLNDAE (75 aa)) constitute a POU-specific domain. The homeobox DNA-binding region spans 395 to 454 (RRKKRTSIETNIRVALEKSFLENQKPTSEEITMIADQLNMEKEVIRVWFCNRRQKEKRIN).

Belongs to the POU transcription factor family. Class-2 subfamily.

The protein resides in the cytoplasm. The protein localises to the nucleus. Its function is as follows. Transcription factor that binds to the octamer motif (5'-ATTTGCAT-3') and activates the promoters of the genes for some small nuclear RNAs (snRNA) and histone H2B. Acts downstream of Notch signaling during radial glia formation. Regulates apoptosis, possibly via an FGF-signaling pathway. This is POU domain, class 2, transcription factor 1 from Xenopus tropicalis (Western clawed frog).